A 281-amino-acid polypeptide reads, in one-letter code: Pantothenate synthetase (281 aa).

30-37 provides a ligand contact to ATP; it reads MGALHRGH. Histidine 37 acts as the Proton donor in catalysis. Glutamine 61 is a (R)-pantoate binding site. Position 61 (glutamine 61) interacts with beta-alanine. 147-150 lines the ATP pocket; sequence GEKD. Residue glutamine 153 participates in (R)-pantoate binding. Residues isoleucine 176 and 184–187 each bind ATP; that span reads LSSR.

It belongs to the pantothenate synthetase family. Homodimer.

It is found in the cytoplasm. It catalyses the reaction (R)-pantoate + beta-alanine + ATP = (R)-pantothenate + AMP + diphosphate + H(+). It participates in cofactor biosynthesis; (R)-pantothenate biosynthesis; (R)-pantothenate from (R)-pantoate and beta-alanine: step 1/1. In terms of biological role, catalyzes the condensation of pantoate with beta-alanine in an ATP-dependent reaction via a pantoyl-adenylate intermediate. This Porphyromonas gingivalis (strain ATCC 33277 / DSM 20709 / CIP 103683 / JCM 12257 / NCTC 11834 / 2561) protein is Pantothenate synthetase.